We begin with the raw amino-acid sequence, 289 residues long: Cytochrome bc1 complex cytochrome c subunit (289 aa).

Basic residues predominate over residues Met-1 to Arg-11. Residues Met-1 to Arg-28 are disordered. Residues Gly-37 to Thr-55 form a helical membrane-spanning segment. 2 Cytochrome c domains span residues Ala-69–Gly-149 and Thr-170–Ile-248. Heme c-binding residues include Cys-82, Cys-85, His-86, Cys-183, Cys-186, and His-187. A helical membrane pass occupies residues Gly-267–Ala-287.

In terms of assembly, the cytochrome bc1 complex is composed of a cytochrome b (QcrB), the Rieske iron-sulfur protein (QcrA) and a diheme cytochrome c (QcrC) subunit. In terms of processing, binds 2 heme c groups covalently per subunit.

It is found in the cell membrane. It carries out the reaction a quinol + 2 Fe(III)-[cytochrome c](out) = a quinone + 2 Fe(II)-[cytochrome c](out) + 2 H(+)(out). Its function is as follows. Cytochrome b subunit of the cytochrome bc1 complex, an essential component of the respiratory electron transport chain required for ATP synthesis. The bc1 complex catalyzes the oxidation of ubiquinol and the reduction of cytochrome c in the respiratory chain. The bc1 complex operates through a Q-cycle mechanism that couples electron transfer to generation of the proton gradient that drives ATP synthesis. The protein is Cytochrome bc1 complex cytochrome c subunit (qcrC) of Mycobacterium leprae (strain TN).